A 381-amino-acid polypeptide reads, in one-letter code: 1-deoxy-D-xylulose 5-phosphate reductoisomerase (381 aa).

The NADPH site is built by threonine 10, glycine 11, serine 12, isoleucine 13, glycine 36, lysine 37, asparagine 38, and asparagine 120. Lysine 121 contributes to the 1-deoxy-D-xylulose 5-phosphate binding site. Glutamate 122 is a binding site for NADPH. Position 146 (aspartate 146) interacts with Mn(2+). Positions 147, 148, 172, and 195 each coordinate 1-deoxy-D-xylulose 5-phosphate. Glutamate 148 contacts Mn(2+). An NADPH-binding site is contributed by glycine 201. 1-deoxy-D-xylulose 5-phosphate is bound by residues serine 208, asparagine 213, lysine 214, and glutamate 217. Glutamate 217 serves as a coordination point for Mn(2+).

It belongs to the DXR family. Mg(2+) serves as cofactor. Mn(2+) is required as a cofactor.

It carries out the reaction 2-C-methyl-D-erythritol 4-phosphate + NADP(+) = 1-deoxy-D-xylulose 5-phosphate + NADPH + H(+). The protein operates within isoprenoid biosynthesis; isopentenyl diphosphate biosynthesis via DXP pathway; isopentenyl diphosphate from 1-deoxy-D-xylulose 5-phosphate: step 1/6. Functionally, catalyzes the NADPH-dependent rearrangement and reduction of 1-deoxy-D-xylulose-5-phosphate (DXP) to 2-C-methyl-D-erythritol 4-phosphate (MEP). The sequence is that of 1-deoxy-D-xylulose 5-phosphate reductoisomerase from Lysinibacillus sphaericus (strain C3-41).